Consider the following 1340-residue polypeptide: MLYSYTEKKRIRKDFGKRSQVLDVPYLLSIQLESFQKFIERDNEGQHGLEAAFRSVFPIQSYSGNAELQYVSYHLGEPVFDVKECQTRGLTFSAPLRVILRLIIRDATTETPIKEQEVYMGEIPLMTENGTFVINGTERVIVSQLHRSPGVFFDSDKGKIHSSGKVLFNARIIPYRGSWLDFEFDQKDHLFVRIDRRRKLPATIILRALQLSTNQILDTFFEKVIFHLNDEHIQMELVPERLRGETASFDIIANGTIYVNKGRRITARHIHQLKIDSIDRINVPREYLVGKIIAIDYIHDNTGEIIVPANIEITLEILDKLGKANFKRIETLFTNDLDHGAYISETLRIDSTRDRLSALVEIYRMMRPGEPPTREAAENLFENIFFSEDRYDLSAVGRMKFNRALLREEIEGSGLLSKSDIIEVMKKLIDIRNGKGEVDDIDHLGNRRVRSVGEMAENQFRIGLVRVERAVKERLSLSDLESLMPQDIINAKPISAAIKEFFGSSQLSQFMDQNNPLSEITHKRRISALGPGGLTRERAGFEVRDVHPTHYGRVCPIETPEGPNIGLINSLSVYAKTNEYGFLETPYRLVHNSVVTEEIHYLSAIEEGNFIIAQANTNLDDKGNFVEELVTCRHKGESGFFSREKVHYMDVSTQQIVSVGASLIPFLEHDDANRALMGANMQRQAVPTLRTDKPLVGTGMERIVAVDSGVTVVAKRGGIVQYVDASRIVINVHSDEMYSGEAGIDIYHMTKYIRSNQNTCISQKPCVTLGELVERGNVLADGPSTDLGELALGQNMRIAFMPWNGYNFEDSMLVSERVVQKDCFTTIHIQELACMSRDTKLGPEEITSDIPNVGEAALCKLDESGIVYIGAEVTSGDILVGKVTPKGETQLTPEEKLLRAIFGEKASDVKDSSLRVPNGYSGTVIDVQIFTRDGVKKDKRTLEIEEMQLQQAKKDLTEERRIFEAALFTRIRHVLGSDITNIDIVKILKLKREDWSQFNIKDNNKYCQLEQLAEQYYELNKVFANKLEEKRRKITQGDDLSPGVLKIVKVYIAVKRQIQPGDKMAGRHGNKGVISKINPIEDMPYDEKGIPVDIVLNPLGVPSRMNIGQILETHLGMAAKGIGDKINKMLKQHKNAEQLRQFIQKAYDIGDQVRQKVNLNLFSDQEILLLAENLKHGMPMATPVFDGAKEKEIKQMLQLAELPVSGQITLFDGRTGEPFERQVTVGYMYMLKLNHLVDDKMHARSTGSYSLVTQQPLGGKAQFGGQRFGEMEVWALEAYGAAYTLQEMLTVKSDDVNGRTKMYKNIVDCNHTMEPAMPESFNVLLKEIRSLGINIELEKN.

This sequence belongs to the RNA polymerase beta chain family. As to quaternary structure, the RNAP catalytic core consists of 2 alpha, 1 beta, 1 beta' and 1 omega subunit. When a sigma factor is associated with the core the holoenzyme is formed, which can initiate transcription.

It carries out the reaction RNA(n) + a ribonucleoside 5'-triphosphate = RNA(n+1) + diphosphate. Its function is as follows. DNA-dependent RNA polymerase catalyzes the transcription of DNA into RNA using the four ribonucleoside triphosphates as substrates. The protein is DNA-directed RNA polymerase subunit beta of Baumannia cicadellinicola subsp. Homalodisca coagulata.